The chain runs to 351 residues: Methionine import ATP-binding protein MetN (351 aa).

In terms of domain architecture, ABC transporter spans 2-247 (ITTSGLTKVY…PGSELAAALF (246 aa)). Residue 38–45 (GQSGAGKS) participates in ATP binding.

Belongs to the ABC transporter superfamily. Methionine importer (TC 3.A.1.24) family. As to quaternary structure, the complex is composed of two ATP-binding proteins (MetN), two transmembrane proteins (MetI) and a solute-binding protein (MetQ).

The protein resides in the cell membrane. It catalyses the reaction L-methionine(out) + ATP + H2O = L-methionine(in) + ADP + phosphate + H(+). The enzyme catalyses D-methionine(out) + ATP + H2O = D-methionine(in) + ADP + phosphate + H(+). In terms of biological role, part of the ABC transporter complex MetNIQ involved in methionine import. Responsible for energy coupling to the transport system. This is Methionine import ATP-binding protein MetN from Streptomyces coelicolor (strain ATCC BAA-471 / A3(2) / M145).